A 1189-amino-acid polypeptide reads, in one-letter code: Nucleolar protein NET1 (1189 aa).

Phosphoserine is present on residues Ser-60 and Ser-166. Disordered stretches follow at residues 160 to 260 (SKLN…ISSG) and 345 to 1189 (TAQD…FKKK). The span at 166–180 (SPQSVQPQQQIPSSS) shows a compositional bias: low complexity. Residues 200 to 210 (IRSATNGSMRV) show a composition bias toward polar residues. Residues Ser-231 and Ser-252 each carry the phosphoserine modification. Residues 244–253 (LPPPTQPQSP) show a composition bias toward pro residues. Over residues 368–381 (PEPRISEIEKELKE) the composition is skewed to basic and acidic residues. The span at 391–407 (PAKAAKIPMKKPYLENG) shows a compositional bias: low complexity. Polar residues predominate over residues 432–450 (ASLQRSQSSIADNNGSPVK). 4 positions are modified to phosphoserine: Ser-437, Ser-439, Ser-447, and Ser-452. The span at 470–486 (ASNTSITKSSNGESWGK) shows a compositional bias: polar residues. At Ser-497 the chain carries Phosphoserine. The segment covering 526-543 (NQVREKEDTNDKLLEKEI) has biased composition (basic and acidic residues). A compositionally biased stretch (acidic residues) spans 590 to 601 (IEDDGNDNDEVD). Over residues 641-657 (SRTSGNSKNSKPYTTVL) the composition is skewed to polar residues. Residues 659–668 (KDIDNSKPDP) show a composition bias toward basic and acidic residues. Thr-676 bears the Phosphothreonine mark. Low complexity predominate over residues 682–691 (KRAAQLLAGA). A compositionally biased stretch (basic and acidic residues) spans 692-702 (KKNEVPQKSTE). Positions 710–725 (TDDESESGIETDFSSD) are enriched in acidic residues. Residues 756 to 777 (KDSKIINKEVDEERNDKRDSQK) are compositionally biased toward basic and acidic residues. Residues 778-792 (KSAVSESSVTNSKIS) show a composition bias toward polar residues. Over residues 806 to 815 (KQNEATKVET) the composition is skewed to basic and acidic residues. The segment covering 822–833 (SSFPVVGGSPSV) has biased composition (low complexity). Residue Ser-830 is modified to Phosphoserine. 3 stretches are compositionally biased toward basic and acidic residues: residues 884 to 897 (DLNKKAEGSKEPEK), 905 to 919 (ANDKNNSKEKEDSKS), and 945 to 954 (ANDKLKDLKA). Residues 969-999 (SNEKNNSSANDDDSSSSGSSTEDESSSSSSS) are compositionally biased toward low complexity. The span at 1023-1039 (RSSSKIEAPSPSVNKKI) shows a compositional bias: polar residues. A Phosphothreonine modification is found at Thr-1042. A compositionally biased stretch (low complexity) spans 1055–1070 (SSPPSVKSKTTSNPSS). Phosphoserine is present on residues Ser-1056 and Ser-1059. The segment covering 1095-1109 (PDVKEKTSKSNEKSQ) has biased composition (basic and acidic residues). Composition is skewed to low complexity over residues 1123–1137 (DSDSNSSSDSVSDSS) and 1158–1169 (SFISAKSASAAL).

It to yeast YKR010c. As to quaternary structure, component of the RENT complex which is composed of at least NET1, CDC14 and SIR2. Interacts with NSI1. Phosphorylated by CDC5.

It is found in the nucleus. It localises to the nucleolus. Its function is as follows. Has a role in chromosome maintenance and is involved in mitotic exit. Inhibits the action of CDC14 by sequestering it in the nucleolus. Also binds to RNA polymerase I and stimulates rRNA synthesis. Influences RDNA chromatin by tethering SIR2 to rDNA in the nucleolus. The polypeptide is Nucleolar protein NET1 (NET1) (Saccharomyces cerevisiae (strain ATCC 204508 / S288c) (Baker's yeast)).